The following is a 207-amino-acid chain: dITP/XTP pyrophosphatase (207 aa).

8–13 (TNNKNK) provides a ligand contact to substrate. The active-site Proton acceptor is D72. Residue D72 participates in Mg(2+) binding. Substrate contacts are provided by residues S73, 157–160 (FGYD), K180, and 185–186 (HR).

It belongs to the HAM1 NTPase family. Homodimer. Mg(2+) serves as cofactor.

The enzyme catalyses XTP + H2O = XMP + diphosphate + H(+). The catalysed reaction is dITP + H2O = dIMP + diphosphate + H(+). It catalyses the reaction ITP + H2O = IMP + diphosphate + H(+). In terms of biological role, pyrophosphatase that catalyzes the hydrolysis of nucleoside triphosphates to their monophosphate derivatives, with a high preference for the non-canonical purine nucleotides XTP (xanthosine triphosphate), dITP (deoxyinosine triphosphate) and ITP. Seems to function as a house-cleaning enzyme that removes non-canonical purine nucleotides from the nucleotide pool, thus preventing their incorporation into DNA/RNA and avoiding chromosomal lesions. This is dITP/XTP pyrophosphatase from Lactobacillus johnsonii (strain CNCM I-12250 / La1 / NCC 533).